An 865-amino-acid polypeptide reads, in one-letter code: SWI/SNF chromatin-remodeling complex subunit sol1 (865 aa).

Disordered regions lie at residues 1–34 (MNNQGFVPASDYPTAVSYPTQGQSYNTQEEQPAY), 54–92 (MMNTSENEPNNLAHSQPFRQSPSTQRNLPNQSFDFASNG), 116–143 (QEKEAAMQQQQQQQQQQQLYQRQMQSRE), and 163–183 (VRQTPQPAPSPNTPSGNANQL). Positions 17–30 (SYPTQGQSYNTQEE) are enriched in polar residues. The segment covering 121–139 (AMQQQQQQQQQQQLYQRQM) has biased composition (low complexity). In terms of domain architecture, ARID spans 188–278 (AASFDKFMVS…YLLPYEEAWL (91 aa)). The tract at residues 288–380 (QQAKANHSAN…QTSSSAAPVD (93 aa)) is disordered. The segment covering 328–353 (HSKSPSPAFTANRFSPAAPTTVSSER) has biased composition (polar residues). The span at 356–368 (PPYPSAPTRPTPP) shows a compositional bias: pro residues. Phosphoserine is present on residues S852 and S855.

This sequence belongs to the SWI1 family. In terms of assembly, component of the SWI/SNF global transcription activator complex composed of at least arp9, arp42, snf5, snf22, snf30, sbf59, sol1, ssr1, ssr2, ssr3, ssr4 and tfg3.

The protein localises to the nucleus. In terms of biological role, component of the SWI/SNF complex, an ATP-dependent chromatin remodeling complex, required for the positive and negative regulation of gene expression of a large number of genes. It changes chromatin structure by altering DNA-histone contacts within a nucleosome, leading eventually to a change in nucleosome position, thus facilitating or repressing binding of gene-specific transcription factors. The chain is SWI/SNF chromatin-remodeling complex subunit sol1 (sol1) from Schizosaccharomyces pombe (strain 972 / ATCC 24843) (Fission yeast).